Reading from the N-terminus, the 255-residue chain is Protein PH0439 (255 aa).

The protein belongs to the CinA family.

This Pyrococcus horikoshii (strain ATCC 700860 / DSM 12428 / JCM 9974 / NBRC 100139 / OT-3) protein is Protein PH0439.